A 408-amino-acid chain; its full sequence is Putative F-box protein At1g53550 (408 aa).

One can recognise an F-box domain in the interval 29–74; that stretch reads TCYFDPIPVDLVINILSRLSLECIARCRCVSKLWSSIIRRPNYNQL.

This Arabidopsis thaliana (Mouse-ear cress) protein is Putative F-box protein At1g53550.